We begin with the raw amino-acid sequence, 516 residues long: Ribose import ATP-binding protein RbsA (516 aa).

2 consecutive ABC transporter domains span residues 14-250 (LRLT…VGRA) and 261-504 (AKGA…AGIG). 46–53 (GENGAGKS) is a binding site for ATP.

The protein belongs to the ABC transporter superfamily. Ribose importer (TC 3.A.1.2.1) family. The complex is composed of an ATP-binding protein (RbsA), two transmembrane proteins (RbsC) and a solute-binding protein (RbsB).

The protein resides in the cell inner membrane. It carries out the reaction D-ribose(out) + ATP + H2O = D-ribose(in) + ADP + phosphate + H(+). Functionally, part of the ABC transporter complex RbsABC involved in ribose import. Responsible for energy coupling to the transport system. This Jannaschia sp. (strain CCS1) protein is Ribose import ATP-binding protein RbsA.